The primary structure comprises 189 residues: Peptidyl-tRNA hydrolase (189 aa).

Tyr-18 lines the tRNA pocket. His-23 acts as the Proton acceptor in catalysis. Residues Phe-67, Asn-69, and Asn-115 each contribute to the tRNA site.

Belongs to the PTH family. Monomer.

Its subcellular location is the cytoplasm. It carries out the reaction an N-acyl-L-alpha-aminoacyl-tRNA + H2O = an N-acyl-L-amino acid + a tRNA + H(+). Hydrolyzes ribosome-free peptidyl-tRNAs (with 1 or more amino acids incorporated), which drop off the ribosome during protein synthesis, or as a result of ribosome stalling. Its function is as follows. Catalyzes the release of premature peptidyl moieties from peptidyl-tRNA molecules trapped in stalled 50S ribosomal subunits, and thus maintains levels of free tRNAs and 50S ribosomes. This is Peptidyl-tRNA hydrolase from Leptospira borgpetersenii serovar Hardjo-bovis (strain JB197).